A 288-amino-acid polypeptide reads, in one-letter code: Phosphatidylserine decarboxylase proenzyme (288 aa).

Catalysis depends on charge relay system; for autoendoproteolytic cleavage activity residues Asp90, His147, and Ser254. Residue Ser254 is the Schiff-base intermediate with substrate; via pyruvic acid; for decarboxylase activity of the active site. The residue at position 254 (Ser254) is a Pyruvic acid (Ser); by autocatalysis.

The protein belongs to the phosphatidylserine decarboxylase family. PSD-B subfamily. Prokaryotic type I sub-subfamily. Heterodimer of a large membrane-associated beta subunit and a small pyruvoyl-containing alpha subunit. Pyruvate serves as cofactor. In terms of processing, is synthesized initially as an inactive proenzyme. Formation of the active enzyme involves a self-maturation process in which the active site pyruvoyl group is generated from an internal serine residue via an autocatalytic post-translational modification. Two non-identical subunits are generated from the proenzyme in this reaction, and the pyruvate is formed at the N-terminus of the alpha chain, which is derived from the carboxyl end of the proenzyme. The autoendoproteolytic cleavage occurs by a canonical serine protease mechanism, in which the side chain hydroxyl group of the serine supplies its oxygen atom to form the C-terminus of the beta chain, while the remainder of the serine residue undergoes an oxidative deamination to produce ammonia and the pyruvoyl prosthetic group on the alpha chain. During this reaction, the Ser that is part of the protease active site of the proenzyme becomes the pyruvoyl prosthetic group, which constitutes an essential element of the active site of the mature decarboxylase.

It localises to the cell membrane. It catalyses the reaction a 1,2-diacyl-sn-glycero-3-phospho-L-serine + H(+) = a 1,2-diacyl-sn-glycero-3-phosphoethanolamine + CO2. The protein operates within phospholipid metabolism; phosphatidylethanolamine biosynthesis; phosphatidylethanolamine from CDP-diacylglycerol: step 2/2. Catalyzes the formation of phosphatidylethanolamine (PtdEtn) from phosphatidylserine (PtdSer). The sequence is that of Phosphatidylserine decarboxylase proenzyme from Hamiltonella defensa subsp. Acyrthosiphon pisum (strain 5AT).